Here is a 621-residue protein sequence, read N- to C-terminus: Pentatricopeptide repeat-containing protein At1g12620 (621 aa).

PPR repeat units follow at residues 36 to 70 (GKVS…RPRP), 71 to 105 (RLID…GIAH), 106 to 140 (NLYT…GYEP), 141 to 175 (DTVT…GHKP), 176 to 210 (TLIT…GFQP), 211 to 245 (NEVT…KIKL), 246 to 280 (DAVK…GFKA), 281 to 315 (DIII…KITP), 316 to 350 (DVVA…GISP), 351 to 385 (DTVT…GCGP), 386 to 420 (NIRT…GVVA), 421 to 455 (DTVT…RVRP), 456 to 490 (DIVS…KMEL), 491 to 525 (DIGI…GVKP), 526 to 560 (DVKT…GHSP), and 561 to 595 (NGCT…GFSV).

It belongs to the PPR family. P subfamily.

The protein is Pentatricopeptide repeat-containing protein At1g12620 of Arabidopsis thaliana (Mouse-ear cress).